The sequence spans 289 residues: Serine/threonine-protein phosphatase Pgam5, mitochondrial (289 aa).

A helical membrane pass occupies residues 7-23; it reads FACGTGAGLAAYYLQRL.

Belongs to the phosphoglycerate mutase family. BPG-dependent PGAM subfamily. As to quaternary structure, interacts with Pk92B/ASK1.

Its subcellular location is the mitochondrion outer membrane. The enzyme catalyses O-phospho-L-seryl-[protein] + H2O = L-seryl-[protein] + phosphate. The catalysed reaction is O-phospho-L-threonyl-[protein] + H2O = L-threonyl-[protein] + phosphate. Its function is as follows. Displays phosphatase activity for serine/threonine residues, and dephosphorylates and activates Pk92B kinase. Has apparently no phosphoglycerate mutase activity. The protein is Serine/threonine-protein phosphatase Pgam5, mitochondrial of Drosophila sechellia (Fruit fly).